The sequence spans 177 residues: Acetyltransferase (177 aa).

An N-acetyltransferase domain is found at 4–174; sequence AQLRRVTAES…PTAIYFKTLG (171 aa). Residues glutamate 27, 96-98, 104-109, 130-131, and tyrosine 141 each bind acetyl-CoA; these read LMV, GRGLGR, and DT.

In terms of biological role, renders tabtoxin-producing pathogens tolerant to their own phytotoxins. This Pseudomonas amygdali pv. tabaci (Pseudomonas syringae pv. tabaci) protein is Acetyltransferase (ttr).